Reading from the N-terminus, the 247-residue chain is Segregation and condensation protein A (247 aa).

It belongs to the ScpA family. As to quaternary structure, component of a cohesin-like complex composed of ScpA, ScpB and the Smc homodimer, in which ScpA and ScpB bind to the head domain of Smc. The presence of the three proteins is required for the association of the complex with DNA.

It localises to the cytoplasm. Its function is as follows. Participates in chromosomal partition during cell division. May act via the formation of a condensin-like complex containing Smc and ScpB that pull DNA away from mid-cell into both cell halves. This is Segregation and condensation protein A from Lactobacillus johnsonii (strain CNCM I-12250 / La1 / NCC 533).